The chain runs to 137 residues: Large ribosomal subunit protein uL16 (137 aa).

Belongs to the universal ribosomal protein uL16 family. As to quaternary structure, part of the 50S ribosomal subunit.

Functionally, binds 23S rRNA and is also seen to make contacts with the A and possibly P site tRNAs. The chain is Large ribosomal subunit protein uL16 from Streptococcus mutans serotype c (strain ATCC 700610 / UA159).